Here is an 88-residue protein sequence, read N- to C-terminus: Small ribosomal subunit protein uS15 (88 aa).

This sequence belongs to the universal ribosomal protein uS15 family. In terms of assembly, part of the 30S ribosomal subunit. Forms a bridge to the 50S subunit in the 70S ribosome, contacting the 23S rRNA.

Its function is as follows. One of the primary rRNA binding proteins, it binds directly to 16S rRNA where it helps nucleate assembly of the platform of the 30S subunit by binding and bridging several RNA helices of the 16S rRNA. Functionally, forms an intersubunit bridge (bridge B4) with the 23S rRNA of the 50S subunit in the ribosome. This chain is Small ribosomal subunit protein uS15, found in Francisella tularensis subsp. holarctica (strain LVS).